A 328-amino-acid chain; its full sequence is Malate dehydrogenase (328 aa).

An NAD(+)-binding site is contributed by 11-17 (GAAGQIG). 2 residues coordinate substrate: arginine 94 and arginine 100. NAD(+)-binding positions include asparagine 107, glutamine 114, and 131–133 (VGN). Residues asparagine 133 and arginine 164 each contribute to the substrate site. Histidine 189 acts as the Proton acceptor in catalysis.

It belongs to the LDH/MDH superfamily. MDH type 2 family.

It catalyses the reaction (S)-malate + NAD(+) = oxaloacetate + NADH + H(+). Catalyzes the reversible oxidation of malate to oxaloacetate. The chain is Malate dehydrogenase from Xanthomonas oryzae pv. oryzae (strain PXO99A).